The sequence spans 91 residues: Small ribosomal subunit protein uS19 (91 aa).

The protein belongs to the universal ribosomal protein uS19 family.

Its function is as follows. Protein S19 forms a complex with S13 that binds strongly to the 16S ribosomal RNA. The sequence is that of Small ribosomal subunit protein uS19 from Shouchella clausii (strain KSM-K16) (Alkalihalobacillus clausii).